The sequence spans 1129 residues: Ubiquitin carboxyl-terminal hydrolase 15 (1129 aa).

The tract at residues 1 to 26 (MVLSNVDAEEVNMDSSMELEESSQEP) is disordered. The segment covering 7 to 23 (DAEEVNMDSSMELEESS) has biased composition (acidic residues). Residues 51-204 (HASYSWVVKN…NDEICISVTV (154 aa)) enclose the MATH domain. The USP domain maps to 230–545 (VGLKNQGATC…NAYMLVYFRK (316 aa)). Catalysis depends on Cys239, which acts as the Nucleophile. His481 (proton acceptor) is an active-site residue.

Belongs to the peptidase C19 family.

Its subcellular location is the nucleus. The catalysed reaction is Thiol-dependent hydrolysis of ester, thioester, amide, peptide and isopeptide bonds formed by the C-terminal Gly of ubiquitin (a 76-residue protein attached to proteins as an intracellular targeting signal).. Its function is as follows. Hydrolase that deubiquitinates target proteins. Cleaves the UBL propeptide in sde2. Involved in regulating the steady-state levels of proteins including prp4. This chain is Ubiquitin carboxyl-terminal hydrolase 15, found in Schizosaccharomyces pombe (strain 972 / ATCC 24843) (Fission yeast).